A 203-amino-acid chain; its full sequence is N-(5'-phosphoribosyl)anthranilate isomerase (203 aa).

The protein belongs to the TrpF family.

The catalysed reaction is N-(5-phospho-beta-D-ribosyl)anthranilate = 1-(2-carboxyphenylamino)-1-deoxy-D-ribulose 5-phosphate. It participates in amino-acid biosynthesis; L-tryptophan biosynthesis; L-tryptophan from chorismate: step 3/5. The polypeptide is N-(5'-phosphoribosyl)anthranilate isomerase (Caldanaerobacter subterraneus subsp. tengcongensis (strain DSM 15242 / JCM 11007 / NBRC 100824 / MB4) (Thermoanaerobacter tengcongensis)).